A 133-amino-acid polypeptide reads, in one-letter code: Napin-1 (133 aa).

Propeptides lie at residues 31–49 (PSWT…EKQG) and 131–133 (PSY).

It belongs to the 2S seed storage albumins family. In terms of assembly, the mature protein consists of a small and a large chain linked by disulfide bonds. Cotyledons and the axis.

In terms of biological role, the small, basic, water-soluble napins are one of the two major kinds of storage proteins synthesized in the seed during its maturation. This Brassica napus (Rape) protein is Napin-1.